The chain runs to 473 residues: Glutamyl-tRNA reductase (473 aa).

Substrate contacts are provided by residues T49 to R52, S109, E114 to Q116, and Q120. C50 acts as the Nucleophile in catalysis. Residue G189 to G194 coordinates NADP(+). The tract at residues S445 to E473 is disordered.

This sequence belongs to the glutamyl-tRNA reductase family. Homodimer.

The catalysed reaction is (S)-4-amino-5-oxopentanoate + tRNA(Glu) + NADP(+) = L-glutamyl-tRNA(Glu) + NADPH + H(+). Its pathway is porphyrin-containing compound metabolism; protoporphyrin-IX biosynthesis; 5-aminolevulinate from L-glutamyl-tRNA(Glu): step 1/2. In terms of biological role, catalyzes the NADPH-dependent reduction of glutamyl-tRNA(Glu) to glutamate 1-semialdehyde (GSA). In Mycobacterium ulcerans (strain Agy99), this protein is Glutamyl-tRNA reductase.